Here is a 686-residue protein sequence, read N- to C-terminus: Translation initiation factor IF-2 (686 aa).

Positions 53–105 are disordered; the sequence is EKPSVADEFEVEEKVVRSKKNSNKKKKKGKGNEDKRQENFAGRQQTQTVETPD. Over residues 69 to 81 the composition is skewed to basic residues; that stretch reads RSKKNSNKKKKKG. The 170-residue stretch at 188-357 folds into the tr-type G domain; it reads ERPAVVTIMG…LLVSEVEEYK (170 aa). Residues 197-204 are G1; sequence GHVDHGKT. Residue 197-204 coordinates GTP; sequence GHVDHGKT. Positions 222–226 are G2; it reads GITQH. The interval 243 to 246 is G3; the sequence is DTPG. GTP-binding positions include 243-247 and 297-300; these read DTPGH and NKMD. Positions 297 to 300 are G4; sequence NKMD. A G5 region spans residues 333–335; sequence SAI.

This sequence belongs to the TRAFAC class translation factor GTPase superfamily. Classic translation factor GTPase family. IF-2 subfamily.

Its subcellular location is the cytoplasm. Functionally, one of the essential components for the initiation of protein synthesis. Protects formylmethionyl-tRNA from spontaneous hydrolysis and promotes its binding to the 30S ribosomal subunits. Also involved in the hydrolysis of GTP during the formation of the 70S ribosomal complex. This chain is Translation initiation factor IF-2, found in Bacillus cereus (strain ATCC 10987 / NRS 248).